The sequence spans 1220 residues: DNA-directed RNA polymerase subunit beta (1220 aa).

This sequence belongs to the RNA polymerase beta chain family. As to quaternary structure, the RNAP catalytic core consists of 2 alpha, 1 beta, 1 beta' and 1 omega subunit. When a sigma factor is associated with the core the holoenzyme is formed, which can initiate transcription.

The catalysed reaction is RNA(n) + a ribonucleoside 5'-triphosphate = RNA(n+1) + diphosphate. DNA-dependent RNA polymerase catalyzes the transcription of DNA into RNA using the four ribonucleoside triphosphates as substrates. The polypeptide is DNA-directed RNA polymerase subunit beta (Mesomycoplasma hyopneumoniae (strain 232) (Mycoplasma hyopneumoniae)).